Reading from the N-terminus, the 869-residue chain is Translation initiation factor IF-2 (869 aa).

2 disordered regions span residues 51 to 78 (KQHG…NMGK) and 105 to 277 (EEET…SDLK). Positions 67 to 76 (QRKTTSTLNM) are enriched in polar residues. Low complexity predominate over residues 110–119 (RALAEQQAQL). The span at 120–241 (EAEKAAAEEA…KKQEAEEVHV (122 aa)) shows a compositional bias: basic and acidic residues. Positions 369-542 (SRAPVVTIMG…ELLDLKAPPT (174 aa)) constitute a tr-type G domain. The segment at 378 to 385 (GHVDHGKT) is G1. Position 378–385 (378–385 (GHVDHGKT)) interacts with GTP. The G2 stretch occupies residues 403–407 (GITQH). The G3 stretch occupies residues 424–427 (DTPG). Residues 424–428 (DTPGH) and 478–481 (NKMD) each bind GTP. The interval 478 to 481 (NKMD) is G4. Residues 514 to 516 (SAK) are G5.

This sequence belongs to the TRAFAC class translation factor GTPase superfamily. Classic translation factor GTPase family. IF-2 subfamily.

It is found in the cytoplasm. Its function is as follows. One of the essential components for the initiation of protein synthesis. Protects formylmethionyl-tRNA from spontaneous hydrolysis and promotes its binding to the 30S ribosomal subunits. Also involved in the hydrolysis of GTP during the formation of the 70S ribosomal complex. This Pseudoalteromonas atlantica (strain T6c / ATCC BAA-1087) protein is Translation initiation factor IF-2.